Consider the following 634-residue polypeptide: Proline and serine-rich protein 3 (634 aa).

5 disordered regions span residues 1 to 69 (MFPK…LIDN), 81 to 142 (FRQA…TSLA), 185 to 242 (DASS…ATLK), 368 to 455 (VPPT…FEGP), and 472 to 534 (FPDS…TAPK). Over residues 15-24 (RTGATRSQRP) the composition is skewed to polar residues. Composition is skewed to low complexity over residues 40–56 (ESWP…STTE), 128–140 (VTGP…SSTS), and 185–202 (DASS…SPSS). Over residues 203 to 215 (VTFNPDSNKSSNP) the composition is skewed to polar residues. Residues 368–377 (VPPTSTSTTP) show a composition bias toward low complexity. Over residues 378-399 (APTPTPQVCIPGPPTSAPPPCA) the composition is skewed to pro residues. The segment covering 436–448 (VSTSSHQKTTVPD) has biased composition (polar residues). Basic and acidic residues predominate over residues 503 to 515 (PESRRGSKTESRK). Serine 588 bears the Phosphoserine mark.

It localises to the cytoplasm. The protein localises to the cytoskeleton. It is found in the microtubule organizing center. The protein resides in the centrosome. This is Proline and serine-rich protein 3 (Proser3) from Mus musculus (Mouse).